The following is a 2513-amino-acid chain: MEKDTPVAIIGVSYRAPGIGGKGLWDYLAEAKSAWTKVPPERFEHFAWYKAGEKKTGVFANEGAHFVDNVFDFDAAFFNMRADEARCADPSHRFMLEVALEAAENAGQSLLDLSGKKIGVFVGAGQHEYSHRVSDDEYAIQTFTATGVAPCMAANRLSYFFDIDGPSVVLDAACASSAYAVDMAVKAIRNGDCDGAFVGAAALNLSPSGWLVLDQSGTLSDIGRSFSYDAKASGFGRGEGAACLLIKRLEDAIRDGDPIQALIRGTACSHSGRSEGITMPSRRAQEKLIWDVHNSAGLDPSNTAVVEVFSRGHGTGTAVGDPIEAGAFTSVLARNRTAANPIYIGSLKSNFGHLEGASGVLAMIKAVLMVRNGVVLPTAGFERINEAIDNYEKIKVPTTPLPWPENEPRRCLVTNFGFGGSSSAVIIDRSPYLHALDGYEDLADIKIPRLNGSSGRSESGSGQSQRLFVFSAKTRDSLTAYLASFHEYLLKAQESHEFLKDLSYTLGQRRTHHAYRASVVANSISDLRKEIPNLKPSKIRQRSVIFVFTGQGAQYARMAYNLRQFTVFAETLEKAETQLNKMGASWSLTEELNKLTDTRINDAEISQPACTAVQLAMVALLQSWGVVPNMVTGHSSGEIAAAFTAGLLTFQEAIAISYFRGQSAVQLSAAQHEYKKGAMLALGVGSEDALKIIDEHAQGYATVAAINSPRSVTISGDKTAIENVRKAADMQGLFARMLKVEVAYHSRHMEQVAASYLKDIEPYFQGKAIPAENSGACRPVFVSSVTGQIIDAVDSSYWIKNLVQPVLFADAIKEVLTHEDQGKSQSIHGSSKTLVEIGPHAALKNPVKQTAELLSSERAWNLASLNYLPSLLRGTNDVHAILELARALFDLGASVELSGVNGTNKHNARVLTELPSYAWDRSYYELRPRVTHDKQFPGEEYHALIGRKAPSNAAQENTYRQVFTLDEMPWIRDHVVSGVTVFPMTGYMSCAIEAARRVDSAAPAAFLITDFHVVQSLEIHEEETVDLTTKLKPAATGEGTFSSKVWSFEVVSWSEANGWTRHCWGKIEPEIADLTLATPTFEASLPLVTSMAGVIEHDMDNEYHNIELRGTKYGPSFRNNVKFYEGKNYTVLEHRIRDLGDALKIPVYRGSPVSVDPPTLDSFLQGAGPFQYDGSGRRLTQMPDYISRFRISNNITSEPNHRLDVVMRRLDYDDKGGRMHVSVAVFGRGSDDQFTPIAEWESFTFRTVSSADDQSASVPDNWSWELLPRYDLISKDTLRDRLLESVGDLGEEEDVRMSKLDAVGCYYIEKALKDTVTLDYSKLPTHLARFVHWGRNVLKEYEVNFESEPTSLLEDVRNLDAQGELLCLMGENLVDILAGRIEPLEVMLTDGRLMRHYEADVANAHLSKIIGYLTENMADLEPWQRILEIGGGTAGTTLPVLEGLSRNRDEPGCLDYTFTDISSGFFEMASKKLSRWSQQITYKRLDITQDPAMQGFTQESYDVVVAANVLHATADMVTTMTHVRSLLKPGGKLILLEATRHPPWLLPFTLLPDWWAAKDKYRDHKQGPMMPAVVWNDLLLDSGFSGVDVVIPTNYRTDNPLMNVVCSTRIGKQDDSETITICGPLVDDTEVNFAQSVARSISKELGCPTEIKRFADIKPDDESYYILLDSKHESVFQNFNPGKFECLKSLLLRNKGLLWVTAKGCSPDAKMIQGMVRTVRLEVEPKNLMLLDNVPSTPEGLSGILKLAARLRDPEVSRDQDMDFAWHDGAIHLPRMRQLKDLKEQFSVEEGVAFRRTQNLRDNSDRGLEMTIQAAGSPDTIYFRRTDPYEVSEDEVLVRVEAAGVGHRDFEVLMGSIPWAPPGYEGAGKVLKIGSQVSHLREGDDVFFLTPEASAFATEVKLASWLVARIPKNMTVTDAAACPLGYCLATLAFRTARLTKNETVLIHSAASSVGQACILLAQDIGARIYVTAGTEDKRDYLHQALGIPRDHIFSSRTAEFRDSLLCKTNNRGVDVVVNSLSGELLTETWAVIAAFGRFVEIGKKDAFLNNSLPMRPFNNNVTLSAIDLRDLYHHRPDDVRSVWNEVVNLLQRKQVRPVDSASVVSISHFSAALRILRSRDHIGRLVVTLGDDNSVMAETALRPSQVSLKDDATYLVAGGTRGIGLDLAYWMIEHGARNIVLLGRSGASGPEAQKILNKFRNTKVCVRAVACNVGDRDELQNALESIKDLPAIRGVVHSALLLSDKLFVNASYEDWVINTTPRVAGAWNLDDLLPTDLDFFVALSSFNGDTGHTGQAIYAGTAGFYNAFSQYRNNRGQYTVSIGLPVVLDVGYVADHDLRGGLLNDSLSAGVTMADIRATFNCILLGPSSPFVRNGRASTFKVYINGQPVQDVTWNYFHPAHSKVRLTNANRNKVKATSGGAEISSASWTTAEDPLTGLIEALIAKVSAMTMMEREDVLPDAPLASYSLDSLVSVELRNWIRRETTAEMTLVSITKAENLRALAVNILAQRKAG.

Residues 4 to 429 (DTPVAIIGVS…GSSSAVIIDR (426 aa)) enclose the Ketosynthase family 3 (KS3) domain. Active-site for beta-ketoacyl synthase activity residues include cysteine 174, histidine 313, and histidine 353. The segment at 547 to 875 (VFTGQGAQYA…NYLPSLLRGT (329 aa)) is malonyl-CoA:ACP transacylase (MAT) domain. Serine 635 (for malonyltransferase activity) is an active-site residue. An N-terminal hotdog fold region spans residues 942–1074 (HALIGRKAPS…GKIEPEIADL (133 aa)). The interval 942 to 1253 (HALIGRKAPS…TFRTVSSADD (312 aa)) is dehydratase (DH) domain. The region spanning 942–1254 (HALIGRKAPS…FRTVSSADDQ (313 aa)) is the PKS/mFAS DH domain. The active-site Proton acceptor; for dehydratase activity is the histidine 974. The segment at 1092 to 1254 (AGVIEHDMDN…FRTVSSADDQ (163 aa)) is C-terminal hotdog fold. Aspartate 1161 (proton donor; for dehydratase activity) is an active-site residue. Positions 1407 to 1600 (SKIIGYLTEN…IPTNYRTDNP (194 aa)) are methyltransferase (CMet) domain. The enoylreductase (ER) domain stretch occupies residues 1816 to 2127 (GSPDTIYFRR…SRDHIGRLVV (312 aa)). The ketoreductase (KR) domain stretch occupies residues 2152 to 2327 (ATYLVAGGTR…YTVSIGLPVV (176 aa)). The region spanning 2433–2510 (DPLTGLIEAL…ALAVNILAQR (78 aa)) is the Carrier domain. At serine 2470 the chain carries O-(pantetheine 4'-phosphoryl)serine.

Its pathway is mycotoxin biosynthesis. Highly reducing polyketide synthase; part of the gene cluster that mediates the biosynthesis of the host-selective toxins (HSTs) ACR-toxins responsible for brown spot of rough lemon disease by the rough lemon pathotype. ACR-toxins cause uncoupling of mitochondrial oxidative-phosphorylation similar to that of classic protonophore. The structure of the major form of ACR-toxin (ACR-toxin I) consists of an alpha-dihydropyrone ring in a 19-carbon polyalcohol, a typical polyketide structure. Minor toxins were characterized as having a pyrone ring with polyalcohol side chains different in length and showing weaker toxicity. The highly reducing polyketide synthase ACRTS2 has all necessary enzymatic domains for multiple cycles of condensation and beta-keto processing. The cytochrome P450 monooxygenase ACRTS1 has also been shown to be essential for ACR-toxin biosynthesis, however its exact role in the pathway has not been elucidated yet. The protein is Highly reducing polyketide synthase ACRTS2 of Alternaria alternata (Alternaria rot fungus).